The chain runs to 129 residues: Protein Turandot A (129 aa).

Residues 1 to 21 (MNSSTALMCFALLLISPLCMG) form the signal peptide. Asparagine 49 is a glycosylation site (N-linked (GlcNAc...) asparagine).

This sequence belongs to the Turandot family. As to expression, expressed in the fat body (at protein level).

The protein resides in the secreted. Its function is as follows. A humoral factor that plays a role in stress tolerance; gives increased resistance to the lethal effects of bacterial challenge and stress. Regulated by the JAK/STAT pathway and NF-KB-like Relish pathway in the fat body, upd3 in the hemocytes and Mekk1 in response to septic injury and consequent immune response. The chain is Protein Turandot A from Drosophila melanogaster (Fruit fly).